The chain runs to 106 residues: Putative defensin-like protein 224 (106 aa).

A signal peptide spans 1–23 (MKTLSLFFTLVILISSCVSNLMA). Disulfide bonds link cysteine 60–cysteine 78, cysteine 64–cysteine 84, and cysteine 68–cysteine 86.

The protein belongs to the DEFL family.

The protein resides in the secreted. This chain is Putative defensin-like protein 224, found in Arabidopsis thaliana (Mouse-ear cress).